The following is a 234-amino-acid chain: ATP-dependent dethiobiotin synthetase BioD (234 aa).

12 to 17 (DVGKTF) contacts ATP. Residue T16 coordinates Mg(2+). K37 is a catalytic residue. T41 provides a ligand contact to substrate. ATP contacts are provided by residues D54 and 115 to 118 (EGAG). Mg(2+)-binding residues include D54 and E115.

It belongs to the dethiobiotin synthetase family. In terms of assembly, homodimer. Mg(2+) serves as cofactor.

Its subcellular location is the cytoplasm. The catalysed reaction is (7R,8S)-7,8-diammoniononanoate + CO2 + ATP = (4R,5S)-dethiobiotin + ADP + phosphate + 3 H(+). Its pathway is cofactor biosynthesis; biotin biosynthesis; biotin from 7,8-diaminononanoate: step 1/2. Its function is as follows. Catalyzes a mechanistically unusual reaction, the ATP-dependent insertion of CO2 between the N7 and N8 nitrogen atoms of 7,8-diaminopelargonic acid (DAPA, also called 7,8-diammoniononanoate) to form a ureido ring. In Lysinibacillus sphaericus (Bacillus sphaericus), this protein is ATP-dependent dethiobiotin synthetase BioD.